Here is a 448-residue protein sequence, read N- to C-terminus: Gamete and mating-type specific protein A (448 aa).

A signal peptide spans 1–19 (MKLILVLLCLISTLFVVKG). One can recognise an SCP domain in the interval 30 to 157 (VSYHNKWRSS…PDKSEVSCSY (128 aa)). 3 N-linked (GlcNAc...) asparagine glycosylation sites follow: Asn-55, Asn-98, and Asn-119. Positions 171–242 (PKTTTPAPTT…PTTPAPTSTL (72 aa)) are disordered. Positions 178–236 (PTTPAPTTPKPTTPAPTTPKPTTPAPTTPKPTTPAPTTPKPTTPAPTTPKPTTPAPTTP) are enriched in pro residues. Active-site residues include Cys-262, His-397, and Asn-415.

Belongs to the peptidase C1 family.

The protein resides in the secreted. Functionally, thiol protease that seems to be involved in the sexual development. This chain is Gamete and mating-type specific protein A (gmsA), found in Dictyostelium discoideum (Social amoeba).